A 358-amino-acid polypeptide reads, in one-letter code: Gibberellin 2-beta-dioxygenase 6 (358 aa).

The 102-residue stretch at 207 to 308 (DETTCFLRLN…RLSVAYFLCP (102 aa)) folds into the Fe2OG dioxygenase domain. Y218 is a 2-oxoglutarate binding site. Fe cation is bound by residues H233, D235, and H289. The 2-oxoglutarate site is built by R299 and S301.

It belongs to the iron/ascorbate-dependent oxidoreductase family. GA2OX subfamily. The cofactor is L-ascorbate. Fe(2+) is required as a cofactor. In terms of tissue distribution, expressed in panicles. Expressed at low levels in young shoots, leaf blades and elongating internodes.

It localises to the cytoplasm. It is found in the nucleus. It catalyses the reaction gibberellin A1 + 2-oxoglutarate + O2 = gibberellin A8 + succinate + CO2. In terms of biological role, catalyzes the 2-beta-hydroxylation of several biologically active gibberellins, leading to the homeostatic regulation of their endogenous level. Catabolism of gibberellins (GAs) plays a central role in plant development. In vitro, converts GA12 and GA53 to the corresponding 2-beta-hydroxylated products GA110 and GA97, respectively. The chain is Gibberellin 2-beta-dioxygenase 6 from Oryza sativa subsp. japonica (Rice).